A 917-amino-acid polypeptide reads, in one-letter code: Hexokinase-1 (917 aa).

Methionine 1 carries the N-acetylmethionine modification. Residues methionine 1 to tyrosine 10 form a mitochondrial-binding peptide (MBP) region. 2 Hexokinase domains span residues aspartate 16–alanine 458 and alanine 464–alanine 906. Residues arginine 30 and aspartate 84 to serine 89 contribute to the ATP site. The segment at aspartate 73–valine 207 is hexokinase small subdomain 1. Residue aspartate 84 to arginine 91 participates in D-glucose 6-phosphate binding. Residues serine 155, threonine 172 to lysine 173, and asparagine 208 to aspartate 209 each bind D-glucose. Residues asparagine 208–serine 447 are hexokinase large subdomain 1. 2 residues coordinate D-glucose 6-phosphate: aspartate 209 and threonine 232. D-glucose is bound by residues asparagine 235, glutamate 260, and glutamine 291 to glutamate 294. Phosphoserine is present on serine 337. Residue asparagine 345 participates in ATP binding. Aspartate 413–serine 415 is a binding site for D-glucose 6-phosphate. Position 425–426 (arginine 425–arginine 426) interacts with ATP. Residues serine 449 and aspartate 532–threonine 536 contribute to the D-glucose 6-phosphate site. The segment at aspartate 521–valine 655 is hexokinase small subdomain 2. Residue aspartate 532–asparagine 537 coordinates ATP. Residues serine 603–phenylalanine 604, threonine 620–lysine 621, and asparagine 656–aspartate 657 contribute to the D-glucose site. Positions asparagine 656–aspartate 895 are hexokinase large subdomain 2. Residues aspartate 657 and threonine 680 each contribute to the D-glucose 6-phosphate site. Threonine 680 contributes to the ATP binding site. D-glucose-binding positions include serine 682–asparagine 683, glutamate 708, and glutamate 742. ATP contacts are provided by residues glycine 747 to methionine 748, threonine 784 to serine 788, and threonine 863 to leucine 867. Residues aspartate 861–threonine 863 and serine 897 each bind D-glucose 6-phosphate.

This sequence belongs to the hexokinase family. Monomer. Interacts with RABL2/RABL2A; binds preferentially to GTP-bound RABL2. Interacts with VDAC1. The HK1-VDAC1 complex interacts with ATF2. Interacts (via N-terminal spermatogenic cell-specific region) with PFKM (via C-terminus). Interacts with SMAD5. As to expression, isoform 2: Erythrocyte specific. Isoform 3: Testis-specific. Isoform 4: Testis-specific.

Its subcellular location is the mitochondrion outer membrane. The protein localises to the cytoplasm. The protein resides in the cytosol. The enzyme catalyses a D-hexose + ATP = a D-hexose 6-phosphate + ADP + H(+). The catalysed reaction is D-fructose + ATP = D-fructose 6-phosphate + ADP + H(+). It catalyses the reaction D-glucose + ATP = D-glucose 6-phosphate + ADP + H(+). It carries out the reaction D-mannose + ATP = D-mannose 6-phosphate + ADP + H(+). The enzyme catalyses D-glucosamine + ATP = D-glucosamine 6-phosphate + ADP + H(+). It participates in carbohydrate metabolism; hexose metabolism. The protein operates within carbohydrate degradation; glycolysis; D-glyceraldehyde 3-phosphate and glycerone phosphate from D-glucose: step 1/4. With respect to regulation, hexokinase is an allosteric enzyme inhibited by its product D-glucose 6-phosphate. Hexokinase activity is inhibited by N-acetyl-D-glucosamine. Its function is as follows. Catalyzes the phosphorylation of various hexoses, such as D-glucose, D-glucosamine, D-fructose, D-mannose and 2-deoxy-D-glucose, to hexose 6-phosphate (D-glucose 6-phosphate, D-glucosamine 6-phosphate, D-fructose 6-phosphate, D-mannose 6-phosphate and 2-deoxy-D-glucose 6-phosphate, respectively). Does not phosphorylate N-acetyl-D-glucosamine. Mediates the initial step of glycolysis by catalyzing phosphorylation of D-glucose to D-glucose 6-phosphate. Involved in innate immunity and inflammation by acting as a pattern recognition receptor for bacterial peptidoglycan. When released in the cytosol, N-acetyl-D-glucosamine component of bacterial peptidoglycan inhibits the hexokinase activity of HK1 and causes its dissociation from mitochondrial outer membrane, thereby activating the NLRP3 inflammasome. In Homo sapiens (Human), this protein is Hexokinase-1.